Reading from the N-terminus, the 460-residue chain is SPbeta prophage-derived uncharacterized protein YopQ (460 aa).

This is SPbeta prophage-derived uncharacterized protein YopQ (yopQ) from Bacillus subtilis (strain 168).